The following is a 120-amino-acid chain: Small ribosomal subunit protein uS13 (120 aa).

Residues 93-120 are disordered; the sequence is RRGLPCRGQKTKTNARTRKGKRKTVGAA.

This sequence belongs to the universal ribosomal protein uS13 family. In terms of assembly, part of the 30S ribosomal subunit. Forms a loose heterodimer with protein S19. Forms two bridges to the 50S subunit in the 70S ribosome.

Located at the top of the head of the 30S subunit, it contacts several helices of the 16S rRNA. In the 70S ribosome it contacts the 23S rRNA (bridge B1a) and protein L5 of the 50S subunit (bridge B1b), connecting the 2 subunits; these bridges are implicated in subunit movement. Contacts the tRNAs in the A and P-sites. The polypeptide is Small ribosomal subunit protein uS13 (Sulfurovum sp. (strain NBC37-1)).